A 114-amino-acid chain; its full sequence is Helper of Tim protein 13 (114 aa).

The segment at 10–90 adopts a CHY-type; degenerate zinc-finger fold; it reads LVDKESRCEH…DSLQCPNCRS (81 aa). Residues Cys17, His19, Cys40, Cys43, Cys67, Cys70, Cys85, and Cys88 each coordinate Zn(2+).

Interacts with the small Tim proteins.

The protein resides in the mitochondrion intermembrane space. It is found in the mitochondrion membrane. In terms of biological role, required for the assembly or recycling of the small Tim proteins in the mitochondrial intermembrane, thereby participating in the import and insertion of multi-pass transmembrane proteins into the mitochondrial inner membrane. In Kluyveromyces lactis (strain ATCC 8585 / CBS 2359 / DSM 70799 / NBRC 1267 / NRRL Y-1140 / WM37) (Yeast), this protein is Helper of Tim protein 13 (HOT13).